Consider the following 186-residue polypeptide: Ribonuclease M5 (186 aa).

The region spanning 6-89 (SQVIVVEGRD…AFLKRDEAVP (84 aa)) is the Toprim domain. Mg(2+) is bound by residues Glu-12, Asp-58, and Asp-60.

This sequence belongs to the ribonuclease M5 family. Mg(2+) is required as a cofactor.

The protein localises to the cytoplasm. The enzyme catalyses Endonucleolytic cleavage of RNA, removing 21 and 42 nucleotides, respectively, from the 5'- and 3'-termini of a 5S-rRNA precursor.. Its function is as follows. Required for correct processing of both the 5' and 3' ends of 5S rRNA precursor. Cleaves both sides of a double-stranded region yielding mature 5S rRNA in one step. The sequence is that of Ribonuclease M5 from Streptococcus pneumoniae (strain ATCC BAA-255 / R6).